Here is a 59-residue protein sequence, read N- to C-terminus: MAVPKRKTSPSRRNMRRSHHALTAEAFQECPNCGELKRPHNLCNACGHYNGREIVSVEA.

This sequence belongs to the bacterial ribosomal protein bL32 family.

This is Large ribosomal subunit protein bL32 from Rhizorhabdus wittichii (strain DSM 6014 / CCUG 31198 / JCM 15750 / NBRC 105917 / EY 4224 / RW1) (Sphingomonas wittichii).